Here is a 4462-residue protein sequence, read N- to C-terminus: Dynein axonemal heavy chain 17 (4462 aa).

Positions 1 to 1808 are stem; the sequence is MTMAPDVRLE…FANICDAQIQ (1808 aa). 2 TPR repeats span residues 1019–1052 and 1702–1736; these read TWTD…VSKC and IWWT…QLNV. AAA regions lie at residues 1809–2030, 2090–2311, 2417–2665, and 2763–3012; these read YSYE…VLVV, KIIK…FGFK, ELDP…IFQG, and SYNE…ERRY. ATP is bound by residues 1847–1854, 2128–2135, 2455–2462, and 2801–2808; these read GPAGTGKT, GNAGSGKS, GNAGTGKS, and GVGGSGKQ. Coiled coils occupy residues 3027–3086 and 3257–3309; these read YQNL…LIQV and DVAP…EKIK. A stalk region spans residues 3027–3313; it reads YQNLLAKKRT…TAEKIKCQQE (287 aa). AAA regions lie at residues 3405–3632 and 3842–4068; these read LTDD…EIEE and IKNF…VLYN. Residues 4147 to 4182 form a TPR 3 repeat; the sequence is PESPYLYGLHPNAEIGFLTVTSEKLFRTVLEMQPKE.

It belongs to the dynein heavy chain family. Consists of at least two heavy chains and a number of intermediate and light chains. In terms of tissue distribution, expressed in testis. Expressed in spermatozoa (at protein level). Not detected in airway epithelial cells (at protein level).

The protein resides in the cytoplasm. Its subcellular location is the cytoskeleton. It localises to the flagellum axoneme. Functionally, force generating protein component of the outer dynein arms (ODAs) in the sperm flagellum. Produces force towards the minus ends of microtubules. Dynein has ATPase activity; the force-producing power stroke is thought to occur on release of ADP. Plays a major role in sperm motility, implicated in sperm flagellar assembly and beating. This Homo sapiens (Human) protein is Dynein axonemal heavy chain 17.